A 469-amino-acid polypeptide reads, in one-letter code: ATP-dependent protease ATPase subunit HslU (469 aa).

Residues Ile24, Gly66 to Glu71, Asp282, Glu347, and Arg419 each bind ATP.

Belongs to the ClpX chaperone family. HslU subfamily. In terms of assembly, a double ring-shaped homohexamer of HslV is capped on each side by a ring-shaped HslU homohexamer. The assembly of the HslU/HslV complex is dependent on binding of ATP.

It is found in the cytoplasm. In terms of biological role, ATPase subunit of a proteasome-like degradation complex; this subunit has chaperone activity. The binding of ATP and its subsequent hydrolysis by HslU are essential for unfolding of protein substrates subsequently hydrolyzed by HslV. HslU recognizes the N-terminal part of its protein substrates and unfolds these before they are guided to HslV for hydrolysis. In Listeria monocytogenes serovar 1/2a (strain ATCC BAA-679 / EGD-e), this protein is ATP-dependent protease ATPase subunit HslU.